The primary structure comprises 158 residues: Transcriptional repressor NrdR (158 aa).

Residues 3–34 (CPFCGSLDTQVIDSRANEAGDAIRRRRRCAAC) fold into a zinc finger. An ATP-cone domain is found at 49-139 (PQIVKTNGTR…VYKSFKDPDD (91 aa)).

Belongs to the NrdR family. Zn(2+) serves as cofactor.

Its function is as follows. Negatively regulates transcription of bacterial ribonucleotide reductase nrd genes and operons by binding to NrdR-boxes. In Thiobacillus denitrificans (strain ATCC 25259 / T1), this protein is Transcriptional repressor NrdR.